The chain runs to 402 residues: La-related protein 7 homolog (402 aa).

An HTH La-type RNA-binding-like region region spans residues 64–138 (EPLNPDFLSA…FDNSSHMVIR (75 aa)). The tract at residues 148–230 (IPLYDRIIYV…LTRKEWTNRE (83 aa)) is RRM-like region. The interval 288–400 (DFTKNLLTRI…EEEKNYWRML (113 aa)) is xRRM-like region. The xRRM domain occupies 288-402 (DFTKNLLTRI…EKNYWRMLKK (115 aa)).

This sequence belongs to the LARP7 family. Component of the telomerase holoenzyme complex composed minimally of trt1 and the telomerase RNA template component. Interacts with skp1.

The protein resides in the chromosome. It localises to the telomere. It is found in the nucleus. The protein localises to the cytoplasm. RNA-binding protein required for assembly of the holoenzyme telomerase ribonucleoprotein (RNP) complex. Specifically binds telomerase RNA ter1 and promotes assembly of ter1 with catalytic subunit trt1. Telomerase is a ribonucleoprotein enzyme essential that copies new telomeric repeats onto chromosome ends and functions to maintain cell division. This is La-related protein 7 homolog from Schizosaccharomyces pombe (strain 972 / ATCC 24843) (Fission yeast).